The chain runs to 537 residues: MTKYIFVTGGVVSSIGKGIVAASLGRLLKNRGLKVTIQKFDPYINVDPGTMSPYQHGEVFVTDDGTETDLDLGHYERFIDINLNKYSNVTTGKIYSEVLQKERRGDYLGATVQVIPHITNAIKEKIMRAGTTTDSDIVITEIGGTVGDIESLPFIEALRQMKSDLGSDNVFYIHTTLIPYLRAAGEMKTKPTQHSVKELRSYGIQPNMLVVRTEQPITREMRNKIASFCDVEPEAVIESLDVKTIYSIPLNVQKQNMDQIVLDHFDVQAPKADMSEWIDLEHHVQNLSRTIKIALVGKYVALQDAYISVTEALKHAGYTDDADIDLKKISAEDVTPENVEELLGDADGILVPGGFGDRGIEGKITAIKYARENDVPFLGICLGMQMASVEFARNVLGLKDANSAEIDPKTPDNIIDLMADQEDVEDMGGTQRLGAYPCKLKPGTVAAKAYHNEEVVMERHRHRYEFNNKYREAMAAKGMVFSGTSPDNRLVEVIELPKKRFFVASQYHPEFLSRPNRPEGLFKAFIDAANQTGKVKA.

The amidoligase domain stretch occupies residues 1–267 (MTKYIFVTGG…DQIVLDHFDV (267 aa)). S13 is a CTP binding site. S13 contributes to the UTP binding site. 14–19 (SIGKGI) serves as a coordination point for ATP. Y54 serves as a coordination point for L-glutamine. ATP is bound at residue D71. 2 residues coordinate Mg(2+): D71 and E141. Residues 148–150 (DIE), 188–193 (KTKPTQ), and K224 each bind CTP. Residues 188–193 (KTKPTQ) and K224 each bind UTP. In terms of domain architecture, Glutamine amidotransferase type-1 spans 292 to 535 (KIALVGKYVA…IDAANQTGKV (244 aa)). Residue G354 participates in L-glutamine binding. C381 functions as the Nucleophile; for glutamine hydrolysis in the catalytic mechanism. L-glutamine-binding positions include 382-385 (LGMQ), E405, and R463. Catalysis depends on residues H508 and E510.

Belongs to the CTP synthase family. Homotetramer.

The enzyme catalyses UTP + L-glutamine + ATP + H2O = CTP + L-glutamate + ADP + phosphate + 2 H(+). The catalysed reaction is L-glutamine + H2O = L-glutamate + NH4(+). It carries out the reaction UTP + NH4(+) + ATP = CTP + ADP + phosphate + 2 H(+). Its pathway is pyrimidine metabolism; CTP biosynthesis via de novo pathway; CTP from UDP: step 2/2. Allosterically activated by GTP, when glutamine is the substrate; GTP has no effect on the reaction when ammonia is the substrate. The allosteric effector GTP functions by stabilizing the protein conformation that binds the tetrahedral intermediate(s) formed during glutamine hydrolysis. Inhibited by the product CTP, via allosteric rather than competitive inhibition. Catalyzes the ATP-dependent amination of UTP to CTP with either L-glutamine or ammonia as the source of nitrogen. Regulates intracellular CTP levels through interactions with the four ribonucleotide triphosphates. This is CTP synthase from Lactiplantibacillus plantarum (strain ATCC BAA-793 / NCIMB 8826 / WCFS1) (Lactobacillus plantarum).